The following is a 420-amino-acid chain: Membrane protein UL43 homolog (420 aa).

Helical transmembrane passes span 58-78 (IFSI…IQFI), 81-101 (KIIY…AFIV), 114-134 (IGKP…TLIT), 157-177 (LMCF…CLAT), 181-201 (LTWK…ISAP), 203-223 (GNIS…INVV), 278-298 (QIPM…VIAL), 312-332 (TDML…IFIP), 343-363 (IIIL…FGLV), 364-384 (LGPT…CINI), and 399-419 (VVKS…LVAL).

The protein belongs to the alphaherpesvirinae HHV-1 UL43 family.

It is found in the host membrane. The protein is Membrane protein UL43 homolog (MDV056) of Gallus gallus (Chicken).